We begin with the raw amino-acid sequence, 139 residues long: ATP synthase epsilon chain (139 aa).

The protein belongs to the ATPase epsilon chain family. As to quaternary structure, F-type ATPases have 2 components, CF(1) - the catalytic core - and CF(0) - the membrane proton channel. CF(1) has five subunits: alpha(3), beta(3), gamma(1), delta(1), epsilon(1). CF(0) has three main subunits: a, b and c.

The protein localises to the cell inner membrane. Its function is as follows. Produces ATP from ADP in the presence of a proton gradient across the membrane. This is ATP synthase epsilon chain from Actinobacillus pleuropneumoniae serotype 5b (strain L20).